The primary structure comprises 921 residues: Isoleucine--tRNA ligase (921 aa).

The short motif at 57–67 (PYANGELHMGH) is the 'HIGH' region element. Glutamate 552 lines the L-isoleucyl-5'-AMP pocket. The 'KMSKS' region signature appears at 593–597 (KMSKS). Lysine 596 provides a ligand contact to ATP. 4 residues coordinate Zn(2+): cysteine 888, cysteine 891, cysteine 908, and cysteine 911.

This sequence belongs to the class-I aminoacyl-tRNA synthetase family. IleS type 1 subfamily. In terms of assembly, monomer. It depends on Zn(2+) as a cofactor.

The protein localises to the cytoplasm. The catalysed reaction is tRNA(Ile) + L-isoleucine + ATP = L-isoleucyl-tRNA(Ile) + AMP + diphosphate. Catalyzes the attachment of isoleucine to tRNA(Ile). As IleRS can inadvertently accommodate and process structurally similar amino acids such as valine, to avoid such errors it has two additional distinct tRNA(Ile)-dependent editing activities. One activity is designated as 'pretransfer' editing and involves the hydrolysis of activated Val-AMP. The other activity is designated 'posttransfer' editing and involves deacylation of mischarged Val-tRNA(Ile). The polypeptide is Isoleucine--tRNA ligase (Listeria innocua serovar 6a (strain ATCC BAA-680 / CLIP 11262)).